Consider the following 343-residue polypeptide: Isopentenyl-diphosphate delta-isomerase (343 aa).

6–7 (RK) contacts substrate. Residues S63, 64-66 (SMT), S94, and N122 each bind FMN. Residue 94-96 (SMR) coordinates substrate. Residue Q157 participates in substrate binding. E158 provides a ligand contact to Mg(2+). FMN contacts are provided by residues K189, T219, 269–271 (GLK), and 290–291 (AG).

The protein belongs to the IPP isomerase type 2 family. As to quaternary structure, homooctamer. Dimer of tetramers. It depends on FMN as a cofactor. The cofactor is NADPH. Mg(2+) serves as cofactor.

It localises to the cytoplasm. The catalysed reaction is isopentenyl diphosphate = dimethylallyl diphosphate. Involved in the biosynthesis of isoprenoids. Catalyzes the 1,3-allylic rearrangement of the homoallylic substrate isopentenyl (IPP) to its allylic isomer, dimethylallyl diphosphate (DMAPP). This is Isopentenyl-diphosphate delta-isomerase from Rickettsia bellii (strain OSU 85-389).